The following is a 402-amino-acid chain: Putative RNA-guided DNA endonuclease (402 aa).

D188 is an active-site residue. The disordered stretch occupies residues 202–239 (KITNPKHERRDRARLAKAQRDVSRKAKGSANRKKARRK). Positions 204 to 225 (TNPKHERRDRARLAKAQRDVSR) are enriched in basic and acidic residues. Residues 226-239 (KAKGSANRKKARRK) are compositionally biased toward basic residues. Residue E272 is part of the active site. Zn(2+) is bound by residues C325, C328, C344, and C346. Residue D353 is part of the active site. The interval 373–402 (GIRPQRESSRTGRSSVKQEPQRATAGIPRL) is disordered.

It in the N-terminal section; belongs to the transposase 2 family. The protein in the C-terminal section; belongs to the transposase 35 family.

An RNA-guided dsDNA endonuclease. When guided by an RNA derived from the right-end element of its insertion sequence element (IS), cleaves DNA downstream of the transposon-associated motif (TAM). Cleaves supercoiled and linear DNA in a staggered manner 15-21 bases from the TAM yielding 5'-overhangs. Binds reRNA, an approximately 150 nucleotide base sRNA derived from the 3' end of its own gene, the right end (RE) of the insertion sequence (IS) plus sequence downstream of the IS. This chain is Putative RNA-guided DNA endonuclease, found in Streptomyces pristinaespiralis.